The chain runs to 510 residues: MWKQILSKLPNKKSSKHEHRGREHGGHSSSSSHTSGASTSKSTDNGAAKSHAKNASPAGKSAASDSGFKDGNLKSSGNNNNNNNNGVFTPYEALPSFKDVPNTEKQNLFIKKLNLCRVVFDFTDPTKNIKEKDIKRQTLLELVDYVNSPNGKFSEVGIQEVVRMVSANIFRTLNPQPRENKVIDALDLEEEEPSMDLAWPHLQLVYELFLRFVASPETDTKLAKRYIDQSFVLRLLDLFDSEDPRERDCLKTILHRIYGKFMVHRPFIRKSINNIFYRFVFETEKHNGIAEFLEILGSIINGFALPLKDEHKVFLVRVLIPLHKPKCLQMYHQQLSYCITQFVEKDCKLADTVIRGLLKYWPVTNSSKEVMFLNELEEVLEATQPPEFQRCMVPLFRQIARCLNSLHFQVAERALFLWNNNHIENLIMQNRKVILPIIFPALERNAQKHWNQAVHSLTLNVRKIFHDLDPELFKECLAKFKEDESKAAETEAKREATWKRLEELGVRKAS.

Residues 1-87 (MWKQILSKLP…NNNNNNNNGV (87 aa)) are disordered. Positions 10–19 (PNKKSSKHEH) are enriched in basic residues. Over residues 27-42 (HSSSSSHTSGASTSKS) the composition is skewed to low complexity.

Belongs to the phosphatase 2A regulatory subunit B56 family. PP2A consists of a common heteromeric enzyme, composed of a catalytic subunit (subunits C), a constant regulatory subunit (subunit A), and a variety of regulatory subunits such as subunits B (the R2/B/PR55/B55, R3/B''/PR72/PR130/PR59 and R5/B'/B56 families). Interacts with BZR1. Interacts with BRI1.

It localises to the nucleus. Its subcellular location is the nucleolus. It is found in the cytoplasm. In terms of biological role, the B regulatory subunit may modulate substrate selectivity and catalytic activity, and may also direct the localization of the catalytic enzyme to a particular subcellular compartment. The holoenzyme composed of PP2AA1, PP2A4 and B'ETA acts as negative regulator of plant innate immunity by controlling BAK1 phosphorylation state and activation in surface-localized immune receptor complexes. Required for the formation of the PP2A holoenzyme that negatively regulates brassinosteroid signaling by dephosphorylating and inactivating BRI1 in the cytoplasm. This is Serine/threonine protein phosphatase 2A 59 kDa regulatory subunit B' eta isoform (B'ETA) from Arabidopsis thaliana (Mouse-ear cress).